The chain runs to 136 residues: Small ribosomal subunit protein uS19 (136 aa).

Residues 114–136 are disordered; the sequence is RSRVSHGSAGVGATRSSKFVPLK.

It belongs to the universal ribosomal protein uS19 family.

In terms of biological role, protein S19 forms a complex with S13 that binds strongly to the 16S ribosomal RNA. This Methanosarcina acetivorans (strain ATCC 35395 / DSM 2834 / JCM 12185 / C2A) protein is Small ribosomal subunit protein uS19.